The following is a 441-amino-acid chain: Xaa-Pro dipeptidase (441 aa).

Aspartate 244, aspartate 255, histidine 336, glutamate 381, and glutamate 420 together coordinate Mn(2+).

This sequence belongs to the peptidase M24B family. Bacterial-type prolidase subfamily. The cofactor is Mn(2+).

It catalyses the reaction Xaa-L-Pro dipeptide + H2O = an L-alpha-amino acid + L-proline. Functionally, splits dipeptides with a prolyl residue in the C-terminal position. The protein is Xaa-Pro dipeptidase of Xanthomonas euvesicatoria pv. vesicatoria (strain 85-10) (Xanthomonas campestris pv. vesicatoria).